A 323-amino-acid polypeptide reads, in one-letter code: GDP-mannose 4,6-dehydratase (323 aa).

Residues 11 to 14, Arg36, 59 to 60, and 81 to 85 contribute to the NADP(+) site; these read TGQD, DM, and LAAQS. Residue Thr126 is part of the active site. Active-site nucleophile residues include Glu128 and Tyr150. Lys154, His180, and Arg185 together coordinate NADP(+).

It belongs to the NAD(P)-dependent epimerase/dehydratase family. GDP-mannose 4,6-dehydratase subfamily. As to quaternary structure, homotetramer. NADP(+) is required as a cofactor.

The enzyme catalyses GDP-alpha-D-mannose = GDP-4-dehydro-alpha-D-rhamnose + H2O. It functions in the pathway bacterial outer membrane biogenesis; lipopolysaccharide biosynthesis. Functionally, catalyzes the conversion of GDP-D-mannose to GDP-4-dehydro-6-deoxy-D-mannose. This Pseudomonas aeruginosa (strain ATCC 15692 / DSM 22644 / CIP 104116 / JCM 14847 / LMG 12228 / 1C / PRS 101 / PAO1) protein is GDP-mannose 4,6-dehydratase.